The primary structure comprises 712 residues: Polyribonucleotide nucleotidyltransferase (712 aa).

Residues D487 and D493 each contribute to the Mg(2+) site. The KH domain maps to 554–613; sequence PKIITMTINPDKIRDVIGPSGKQINKIIEETGVKIDIEQDGTVFISSINQEMNDKAKKII. In terms of domain architecture, S1 motif spans 623–691; that stretch reads GEIYEAKVKR…KQGRVNLSRK (69 aa).

The protein belongs to the polyribonucleotide nucleotidyltransferase family. The cofactor is Mg(2+).

It is found in the cytoplasm. The enzyme catalyses RNA(n+1) + phosphate = RNA(n) + a ribonucleoside 5'-diphosphate. Its function is as follows. Involved in mRNA degradation. Catalyzes the phosphorolysis of single-stranded polyribonucleotides processively in the 3'- to 5'-direction. In Bacillus cereus (strain ATCC 14579 / DSM 31 / CCUG 7414 / JCM 2152 / NBRC 15305 / NCIMB 9373 / NCTC 2599 / NRRL B-3711), this protein is Polyribonucleotide nucleotidyltransferase.